Reading from the N-terminus, the 362-residue chain is 3-dehydroquinate synthase (362 aa).

NAD(+)-binding positions include aspartate 72–lysine 77, glycine 106–aspartate 110, threonine 130–threonine 131, lysine 143, and lysine 152. The Zn(2+) site is built by glutamate 185, histidine 248, and histidine 265.

It belongs to the sugar phosphate cyclases superfamily. Dehydroquinate synthase family. Co(2+) serves as cofactor. The cofactor is Zn(2+). Requires NAD(+) as cofactor.

The protein localises to the cytoplasm. The enzyme catalyses 7-phospho-2-dehydro-3-deoxy-D-arabino-heptonate = 3-dehydroquinate + phosphate. Its pathway is metabolic intermediate biosynthesis; chorismate biosynthesis; chorismate from D-erythrose 4-phosphate and phosphoenolpyruvate: step 2/7. Its function is as follows. Catalyzes the conversion of 3-deoxy-D-arabino-heptulosonate 7-phosphate (DAHP) to dehydroquinate (DHQ). This is 3-dehydroquinate synthase from Laribacter hongkongensis (strain HLHK9).